The sequence spans 480 residues: Glycogen synthase (480 aa).

Position 15 (K15) interacts with ADP-alpha-D-glucose.

The protein belongs to the glycosyltransferase 1 family. Bacterial/plant glycogen synthase subfamily.

It catalyses the reaction [(1-&gt;4)-alpha-D-glucosyl](n) + ADP-alpha-D-glucose = [(1-&gt;4)-alpha-D-glucosyl](n+1) + ADP + H(+). It participates in glycan biosynthesis; glycogen biosynthesis. In terms of biological role, synthesizes alpha-1,4-glucan chains using ADP-glucose. This Rhizobium tropici protein is Glycogen synthase.